We begin with the raw amino-acid sequence, 180 residues long: MGDCNISTSDNKQNRKNHEIRVPRVRVIGSDGEMIGVLSRDEALAMAEKEGLDLVEIQPQADPPVCKVMNFGKFKFEQQKKANEAKKKTKQVEIKELKFRPVTDEGDYQIKLRNMRRFLEEGDKVKINIRFRGREMSHQELGRQMAARIEMDLGDDVVIESRPRLEGRQMVMMVAPRKKS.

The protein belongs to the IF-3 family. Monomer.

It is found in the cytoplasm. Its function is as follows. IF-3 binds to the 30S ribosomal subunit and shifts the equilibrium between 70S ribosomes and their 50S and 30S subunits in favor of the free subunits, thus enhancing the availability of 30S subunits on which protein synthesis initiation begins. The polypeptide is Translation initiation factor IF-3 (Xylella fastidiosa (strain Temecula1 / ATCC 700964)).